The chain runs to 168 residues: Photosystem I assembly protein Ycf3 (168 aa).

3 TPR repeats span residues Ala-35–Pro-68, Ser-72–Leu-105, and Gly-120–Asn-153.

It belongs to the Ycf3 family.

The protein resides in the plastid. It localises to the chloroplast thylakoid membrane. Its function is as follows. Essential for the assembly of the photosystem I (PSI) complex. May act as a chaperone-like factor to guide the assembly of the PSI subunits. This Illicium oligandrum (Star anise) protein is Photosystem I assembly protein Ycf3.